A 313-amino-acid chain; its full sequence is Ribosomal RNA small subunit methyltransferase H (313 aa).

S-adenosyl-L-methionine is bound by residues 35 to 37, D55, F80, D102, and Q109; that span reads GGH.

It belongs to the methyltransferase superfamily. RsmH family.

It is found in the cytoplasm. The enzyme catalyses cytidine(1402) in 16S rRNA + S-adenosyl-L-methionine = N(4)-methylcytidine(1402) in 16S rRNA + S-adenosyl-L-homocysteine + H(+). Functionally, specifically methylates the N4 position of cytidine in position 1402 (C1402) of 16S rRNA. In Shewanella loihica (strain ATCC BAA-1088 / PV-4), this protein is Ribosomal RNA small subunit methyltransferase H.